We begin with the raw amino-acid sequence, 276 residues long: Flagellin FljJ (276 aa).

Residues 51–80 (RPGAGDMSGLAREDEPGSGDIDRGRGPRAG) are disordered. A compositionally biased stretch (basic and acidic residues) spans 61–75 (AREDEPGSGDIDRGR).

The protein belongs to the bacterial flagellin family. In terms of assembly, in C.crescentus, the flagellar filament is composed of multiple flagellins of 29 kDa; 27 kDa and 25 kDa.

The protein localises to the secreted. The protein resides in the bacterial flagellum. Flagellin is the subunit protein which polymerizes to form the filaments of bacterial flagella. In Caulobacter vibrioides (strain ATCC 19089 / CIP 103742 / CB 15) (Caulobacter crescentus), this protein is Flagellin FljJ (fljJ).